The chain runs to 764 residues: Oxysterol-binding protein-related protein 10 (764 aa).

The interval 1 to 74 (MERAVQGTDG…PSGGGGRRRE (74 aa)) is disordered. Composition is skewed to low complexity over residues 15-47 (NSSS…SAAA) and 55-65 (RSSPGSVAASP). Phosphoserine is present on residues serine 29 and serine 30. Arginine 38 bears the Omega-N-methylarginine mark. Residues serine 57, serine 60, and serine 64 each carry the phosphoserine modification. One can recognise a PH domain in the interval 74–171 (EPALEGVLSK…WVTQLRACAK (98 aa)). Threonine 196 carries the phosphothreonine modification. Phosphoserine is present on residues serine 201, serine 209, and serine 223. 2 disordered regions span residues 304–335 (GQPS…NGTL) and 354–391 (AEDE…TELG). Residues 359–370 (TSQPEPEPNSGS) show a composition bias toward polar residues. The segment covering 374–389 (LSEDEKSDNEDKEETE) has biased composition (acidic residues). Residues 413-418 (LTKVVL) and 477-480 (KPYN) contribute to the a 1,2-diacyl-sn-glycero-3-phospho-(1D-myo-inositol 4-phosphate) site. Residues 413-418 (LTKVVL) and asparagine 480 each bind a 1,2-diacyl-sn-glycero-3-phospho-L-serine. Residues 501–520 (KRTASRSPASCHEHPMADDP) are disordered. Over residues 511 to 520 (CHEHPMADDP) the composition is skewed to basic and acidic residues. Residue 535–536 (HH) participates in a 1,2-diacyl-sn-glycero-3-phospho-(1D-myo-inositol 4-phosphate) binding. Position 561 (serine 561) interacts with a 1,2-diacyl-sn-glycero-3-phospho-L-serine. The stretch at 713–740 (DIDAATEQKRHLEEKQRVEERKRENLRT) forms a coiled coil. Positions 721, 725, and 729 each coordinate a 1,2-diacyl-sn-glycero-3-phospho-(1D-myo-inositol 4-phosphate).

Belongs to the OSBP family. In terms of assembly, interacts with OSBPL9. Interacts with DIAPH1.

The protein resides in the cytoplasm. It is found in the cytoskeleton. Probable lipid transporter involved in lipid countertransport between the endoplasmic reticulum and the plasma membrane. Its ability to bind phosphatidylserine, suggests that it specifically exchanges phosphatidylserine with phosphatidylinositol 4-phosphate (PI4P), delivering phosphatidylserine to the plasma membrane in exchange for PI4P. Plays a role in negative regulation of lipid biosynthesis. Negatively regulates APOB secretion from hepatocytes. Binds cholesterol and acidic phospholipids. Also binds 25-hydroxycholesterol. Binds phosphatidylserine. The sequence is that of Oxysterol-binding protein-related protein 10 (OSBPL10) from Homo sapiens (Human).